A 144-amino-acid polypeptide reads, in one-letter code: Interleukin-9 (144 aa).

Residues 1–18 (MLLAMVLTSALLLCSVAG) form the signal peptide. Pyrrolidone carboxylic acid is present on Gln19. Residues Asn50, Asn63, Asn78, and Asn114 are each glycosylated (N-linked (GlcNAc...) asparagine).

It belongs to the IL-7/IL-9 family. In terms of assembly, interacts with IL9R. Interacts with IL2RG.

It is found in the secreted. Multifunctional cytokine secreted mainly by T-helper 2 lymphocytes and also mast cells or NKT cells that plays important roles in the immune response against parasites. Affects intestinal epithelial permeability and adaptive immunity. In addition, induces the differentiation of specific T-cell subsets such as IL-17 producing helper T-cells (TH17) and also proliferation and differentiation of mast cells. Mechanistically, exerts its biological effects through a receptor composed of IL9R subunit and a signal transducing subunit IL2RG. Receptor stimulation results in the rapid activation of JAK1 and JAK3 kinase activities leading to STAT1, STAT3 and STAT5-mediated transcriptional programs. Induction of differentiation genes seems to be mediated by STAT1 alone, while protection of cells from apoptosis depends on STAT3 and STAT5. This Homo sapiens (Human) protein is Interleukin-9 (IL9).